The chain runs to 182 residues: Peptide deformylase (182 aa).

Residues Cys100 and His142 each contribute to the Fe cation site. The active site involves Glu143. A Fe cation-binding site is contributed by His146.

Belongs to the polypeptide deformylase family. The cofactor is Fe(2+).

The enzyme catalyses N-terminal N-formyl-L-methionyl-[peptide] + H2O = N-terminal L-methionyl-[peptide] + formate. Removes the formyl group from the N-terminal Met of newly synthesized proteins. Requires at least a dipeptide for an efficient rate of reaction. N-terminal L-methionine is a prerequisite for activity but the enzyme has broad specificity at other positions. In Bartonella bacilliformis (strain ATCC 35685 / KC583 / Herrer 020/F12,63), this protein is Peptide deformylase.